Here is an 83-residue protein sequence, read N- to C-terminus: Retinal cone rhodopsin-sensitive cGMP 3',5'-cyclic phosphodiesterase subunit gamma (83 aa).

The interval 1–51 is disordered; sequence MSDSPCLSPPAPSQGPTTPRKGPPKFKQRQTRQFKSKPPKKGVKGFGDDIP. Positions 22-43 are enriched in basic residues; sequence GPPKFKQRQTRQFKSKPPKKGV.

The protein belongs to the rod/cone cGMP-PDE gamma subunit family. As to quaternary structure, tetramer composed of two catalytic chains (alpha and beta), and two inhibitory chains (gamma).

It carries out the reaction 3',5'-cyclic GMP + H2O = GMP + H(+). Functionally, participates in processes of transmission and amplification of the visual signal. cGMP-PDEs are the effector molecules in G-protein-mediated phototransduction in vertebrate rods and cones. In Rattus norvegicus (Rat), this protein is Retinal cone rhodopsin-sensitive cGMP 3',5'-cyclic phosphodiesterase subunit gamma (Pde6h).